Consider the following 485-residue polypeptide: Putative ATP-dependent RNA helicase ste13 (485 aa).

The interval 16–38 is disordered; that stretch reads DRESFKGQMKAQPVDMRPKTEDV. A Q motif motif is present at residues 44–72; that stretch reads TEFEDYYLKRELLMGIFEAGFERPSPIQE. Residues 75-245 form the Helicase ATP-binding domain; the sequence is IPIALSGRDI…DKHLNKPYEI (171 aa). 88 to 95 lines the ATP pocket; the sequence is AKNGTGKT. The DEAD box signature appears at 193–196; it reads DEAD. Residues 255–415 enclose the Helicase C-terminal domain; sequence GVTQYYAFVD…PIPPSIDPSL (161 aa). A disordered region spans residues 437–485; that stretch reads LAAQQAKGQEGYHNRPNNNRGGHPRGGGNRGGYRQSNRQPRYRGQQKAD.

This sequence belongs to the DEAD box helicase family. DDX6/DHH1 subfamily.

It localises to the cytoplasm. Its subcellular location is the P-body. It carries out the reaction ATP + H2O = ADP + phosphate + H(+). In terms of biological role, ATP-dependent RNA helicase involved in mRNA turnover, and more specifically in mRNA decapping. Is involved in G1/S DNA-damage checkpoint recovery, probably through the regulation of the translational status of a subset of mRNAs. May also have a role in translation and mRNA nuclear export. The protein is Putative ATP-dependent RNA helicase ste13 (ste13) of Schizosaccharomyces pombe (strain 972 / ATCC 24843) (Fission yeast).